The chain runs to 391 residues: GTPase Obg (391 aa).

Residues Met1–Leu159 enclose the Obg domain. One can recognise an OBG-type G domain in the interval Ala160–Glu333. Residues Gly166–Ser173, Phe191–Val195, Asp213–Gly216, Asn283–Asp286, and Ser314–Ala316 each bind GTP. Mg(2+) is bound by residues Ser173 and Thr193. The segment at Gln361 to Pro391 is disordered. Acidic residues predominate over residues Thr365 to Val385.

Belongs to the TRAFAC class OBG-HflX-like GTPase superfamily. OBG GTPase family. Monomer. Mg(2+) serves as cofactor.

The protein resides in the cytoplasm. An essential GTPase which binds GTP, GDP and possibly (p)ppGpp with moderate affinity, with high nucleotide exchange rates and a fairly low GTP hydrolysis rate. Plays a role in control of the cell cycle, stress response, ribosome biogenesis and in those bacteria that undergo differentiation, in morphogenesis control. The polypeptide is GTPase Obg (Glaesserella parasuis serovar 5 (strain SH0165) (Haemophilus parasuis)).